Consider the following 316-residue polypeptide: Galectin-8 (316 aa).

2 Galectin domains span residues 18–151 and 186–316; these read YVST…IGFR and FEAR…VRSW. Arg-68, Asn-78, and Glu-88 together coordinate a carbohydrate. 248–254 serves as a coordination point for a beta-D-galactoside; the sequence is WGEEERN.

Homodimer. Interacts with CALCOCO2/NDP52. Interacts with PDPN; the interaction is glycosylation-dependent; may participate in connection of the lymphatic endothelium to the surrounding extracellular matrix. In terms of tissue distribution, expressed in liver, kidney, cardiac muscle, lung, and brain.

The protein localises to the cytoplasmic vesicle. It is found in the cytoplasm. It localises to the cytosol. In terms of biological role, beta-galactoside-binding lectin that acts as a sensor of membrane damage caused by infection and restricts the proliferation of infecting pathogens by targeting them for autophagy. Detects membrane rupture by binding beta-galactoside ligands located on the lumenal side of the endosome membrane; these ligands becoming exposed to the cytoplasm following rupture. Restricts infection by initiating autophagy via interaction with CALCOCO2/NDP52. Required to restrict infection of bacterial invasion such as S.typhimurium. Also required to restrict infection of Picornaviridae viruses. Has a marked preference for 3'-O-sialylated and 3'-O-sulfated glycans. The sequence is that of Galectin-8 (Lgals8) from Rattus norvegicus (Rat).